Reading from the N-terminus, the 146-residue chain is Large ribosomal subunit protein uL15 (146 aa).

Residues 1–13 (MKLHELKPSEGSR) are compositionally biased toward basic and acidic residues. The tract at residues 1–54 (MKLHELKPSEGSRKVRNRVGRGIGSGNGKTAGKGHKGQNARSGGGVRPGFEGGQ) is disordered. 2 stretches are compositionally biased toward gly residues: residues 21–31 (RGIGSGNGKTA) and 42–52 (SGGGVRPGFEG).

This sequence belongs to the universal ribosomal protein uL15 family. As to quaternary structure, part of the 50S ribosomal subunit.

Its function is as follows. Binds to the 23S rRNA. This chain is Large ribosomal subunit protein uL15, found in Bacillus velezensis (strain DSM 23117 / BGSC 10A6 / LMG 26770 / FZB42) (Bacillus amyloliquefaciens subsp. plantarum).